The primary structure comprises 244 residues: Glutathione S-transferase theta-2B (244 aa).

One can recognise a GST N-terminal domain in the interval Gly-2–Asp-82. Residues His-40 to Lys-41, Lys-53 to Leu-54, Glu-66 to Ser-67, and Asp-104 to Arg-107 contribute to the glutathione site. Positions Asp-88 to Thr-224 constitute a GST C-terminal domain.

This sequence belongs to the GST superfamily. Theta family. Homodimer. As to expression, expressed at low levels in liver. In lung, expressed at low levels in ciliated bronchiolar cells, alveolar macrophages and alveolar type II cells.

The protein localises to the cytoplasm. It is found in the cytosol. It catalyses the reaction RX + glutathione = an S-substituted glutathione + a halide anion + H(+). Functionally, conjugation of reduced glutathione to a wide number of exogenous and endogenous hydrophobic electrophiles. Has a sulfatase activity. This chain is Glutathione S-transferase theta-2B (GSTT2B), found in Homo sapiens (Human).